A 356-amino-acid polypeptide reads, in one-letter code: CLIP domain-containing serine protease C9 (356 aa).

The region spanning 49 to 94 is the Clip domain; that stretch reads SCDTPQVIGGKCMNISLCDPAFVHSIAYQEHTPVCQQNAFYRVICC. 4 disulfide bridges follow: Cys50-Cys93, Cys60-Cys83, Cys66-Cys94, and Cys139-Cys155. Asn62 is a glycosylation site (N-linked (GlcNAc...) asparagine). Residues 109-351 enclose the Peptidase S1 domain; sequence IMHGIEAEPG…YFGWIKETVS (243 aa). Residues His154 and Asp194 each act as charge relay system in the active site. Cys258 and Cys284 are oxidised to a cystine. Asn292 carries N-linked (GlcNAc...) asparagine glycosylation. Residues Cys300 and Cys328 are joined by a disulfide bond. The active-site Charge relay system is Ser304.

It belongs to the peptidase S1 family. CLIP subfamily. In terms of assembly, in the active form, heterodimer of a p12 subunit and a p30 subunit; disulfide-linked. In terms of processing, secreted as a full-length protein. Following bacterium E.coli infection, proteolytically cleaved into two chains, p12 and p30, which remain covalently linked.

It localises to the secreted. Probable serine protease which plays an essential role in the innate immune response against bacteria and protozoa infection by activating the melanization cascade. In the susceptible strain G3, appears to be dispensable for ookinete elimination which occurs by lysis. In Anopheles gambiae (African malaria mosquito), this protein is CLIP domain-containing serine protease C9.